Consider the following 141-residue polypeptide: Putative antiporter subunit mnhB2 (141 aa).

4 helical membrane passes run 10–30, 35–55, 70–90, and 116–136; these read TVTKIVVFILLTFGFYLFLAG, GGGFIGGLVFSSAFLLMFLAF, ILMICGSLLSFLTAVVPMFFG, and VFEAGIVLAVVGVVVTVMLSI.

Belongs to the CPA3 antiporters (TC 2.A.63) subunit B family. In terms of assembly, may form a heterooligomeric complex that consists of seven subunits: mnhA2, mnhB2, mnhC2, mnhD2, mnhE2, mnhF2 and mnhG2.

The protein localises to the cell membrane. This Staphylococcus saprophyticus subsp. saprophyticus (strain ATCC 15305 / DSM 20229 / NCIMB 8711 / NCTC 7292 / S-41) protein is Putative antiporter subunit mnhB2 (mnhB2).